The primary structure comprises 528 residues: Putative ABC transporter ATP-binding protein MA_1418 (528 aa).

2 consecutive ABC transporter domains span residues 2–242 and 262–494; these read IELR…TNLT and ISVK…SDYK. Residues 36-43 and 294-301 each bind ATP; these read GHSAAGKT and GENGSGKT.

The protein belongs to the ABC transporter superfamily.

It is found in the cell membrane. Probably part of an ABC transporter complex. Responsible for energy coupling to the transport system. In Methanosarcina acetivorans (strain ATCC 35395 / DSM 2834 / JCM 12185 / C2A), this protein is Putative ABC transporter ATP-binding protein MA_1418.